Consider the following 504-residue polypeptide: Anaerobic nitric oxide reductase transcription regulator NorR (504 aa).

Aspartate 57 is modified (4-aspartylphosphate). Residues 187–416 (MIGLSPGMTQ…LEHAIHRAVV (230 aa)) form the Sigma-54 factor interaction domain. ATP is bound by residues 215–222 (GETGTGKE) and 278–287 (ADNGTLFLDE). The segment at residues 479-498 (WAACARMLETDVANLHRLAK) is a DNA-binding region (H-T-H motif).

It participates in nitrogen metabolism; nitric oxide reduction. Functionally, required for the expression of anaerobic nitric oxide (NO) reductase, acts as a transcriptional activator for at least the norVW operon. Activation also requires sigma-54. In Escherichia coli (strain 55989 / EAEC), this protein is Anaerobic nitric oxide reductase transcription regulator NorR.